We begin with the raw amino-acid sequence, 1249 residues long: AMB antimetabolite synthetase AmbB (1249 aa).

Residues 245 to 633 are adenylation; the sequence is FEAQARRTPQ…LGRLDDQVKF (389 aa). The disordered stretch occupies residues 716–735; that stretch reads IDRKALPRPQATGAEPQALP. In terms of domain architecture, Carrier spans 734–809; the sequence is LPSDPLEQAL…ALLELLRQAA (76 aa). Position 768 is an O-(pantetheine 4'-phosphoryl)serine (Ser768). A condensation region spans residues 823-1150; sequence GLSLAERRLW…CVTQALRQRG (328 aa).

The protein belongs to the NRP synthetase family. Requires pantetheine 4'-phosphate as cofactor.

It carries out the reaction holo-[peptidyl-carrier protein] + L-alanine + ATP = L-alanyl-[peptidyl-carrier protein] + AMP + diphosphate. In terms of biological role, involved in the biosynthesis of the antimetabolite L-2-amino-4-methoxy-trans-3-butenoic acid (AMB), a non-proteinogenic amino acid which is toxic for prokaryotes and eukaryotes. Adenylates L-alanine and loads it onto its peptidyl carrier domain via a thioester linkage to the phosphopanthetheine moiety. In addition, loads activated L-Ala in trans onto the second carrier domain of AmbE. Can also activate L-Ser, Gly and D-Ala, albeit to a lower extent. The condensation domain of AmbB probably condenses the activated L-Ala and the L-Glu loaded on AmbE to form a L-Glu-L-Ala dipeptide at the first carrier domain of AmbE. This Pseudomonas aeruginosa (strain ATCC 15692 / DSM 22644 / CIP 104116 / JCM 14847 / LMG 12228 / 1C / PRS 101 / PAO1) protein is AMB antimetabolite synthetase AmbB.